Reading from the N-terminus, the 408-residue chain is Na(+)-translocating NADH-quinone reductase subunit F (408 aa).

The chain crosses the membrane as a helical span at residues Ile-4–Phe-24. Positions Gly-33–Val-127 constitute a 2Fe-2S ferredoxin-type domain. Residues Cys-70, Cys-76, Cys-79, and Cys-111 each coordinate [2Fe-2S] cluster. An FAD-binding FR-type domain is found at Ile-130–Lys-270.

It belongs to the NqrF family. As to quaternary structure, composed of six subunits; NqrA, NqrB, NqrC, NqrD, NqrE and NqrF. [2Fe-2S] cluster is required as a cofactor. It depends on FAD as a cofactor.

Its subcellular location is the cell inner membrane. It catalyses the reaction a ubiquinone + n Na(+)(in) + NADH + H(+) = a ubiquinol + n Na(+)(out) + NAD(+). Functionally, NQR complex catalyzes the reduction of ubiquinone-1 to ubiquinol by two successive reactions, coupled with the transport of Na(+) ions from the cytoplasm to the periplasm. The first step is catalyzed by NqrF, which accepts electrons from NADH and reduces ubiquinone-1 to ubisemiquinone by a one-electron transfer pathway. The sequence is that of Na(+)-translocating NADH-quinone reductase subunit F from Idiomarina loihiensis (strain ATCC BAA-735 / DSM 15497 / L2-TR).